Consider the following 171-residue polypeptide: Large ribosomal subunit protein uL5 (171 aa).

It belongs to the universal ribosomal protein uL5 family. As to quaternary structure, part of the 50S ribosomal subunit; contacts the 5S rRNA and probably tRNA. Forms a bridge to the 30S subunit in the 70S ribosome.

In terms of biological role, this is one of the proteins that bind and probably mediate the attachment of the 5S RNA into the large ribosomal subunit, where it forms part of the central protuberance. In the 70S ribosome it contacts protein S13 of the 30S subunit (bridge B1b), connecting the 2 subunits; this bridge is implicated in subunit movement. May contact the P site tRNA; the 5S rRNA and some of its associated proteins might help stabilize positioning of ribosome-bound tRNAs. This Methanocorpusculum labreanum (strain ATCC 43576 / DSM 4855 / Z) protein is Large ribosomal subunit protein uL5.